The sequence spans 840 residues: Probable alpha-glucuronidase A (840 aa).

Positions 1–19 are cleaved as a signal peptide; it reads MWSGIPIFALLSSIGIAAA. Residues Asn-50, Asn-149, Asn-222, Asn-262, Asn-279, Asn-310, Asn-465, Asn-527, Asn-576, Asn-610, Asn-682, Asn-723, and Asn-732 are each glycosylated (N-linked (GlcNAc...) asparagine).

The protein belongs to the glycosyl hydrolase 67 family.

The protein localises to the secreted. It carries out the reaction an alpha-D-glucuronoside + H2O = D-glucuronate + an alcohol. Functionally, alpha-glucuronidase involved in the hydrolysis of xylan, a major structural heterogeneous polysaccharide found in plant biomass representing the second most abundant polysaccharide in the biosphere, after cellulose. Releases 4-O-methylglucuronic acid from xylan. This is Probable alpha-glucuronidase A (aguA) from Aspergillus fumigatus (strain ATCC MYA-4609 / CBS 101355 / FGSC A1100 / Af293) (Neosartorya fumigata).